A 1191-amino-acid chain; its full sequence is Phosphatidylinositol 3,4,5-trisphosphate 5-phosphatase 1 (1191 aa).

In terms of domain architecture, SH2 spans 8-104 (WNHGNITRSK…GLVTHLQYPV (97 aa)). The interval 122–148 (SVMSPPELPPRNIPMSAGPSEAKDLPL) is disordered. Residues 127-132 (PELPPR) carry the SH3-binding 1 motif. Residue serine 246 is modified to Phosphoserine. An NPXY motif 1 motif is present at residues 915–918 (NPNY). At tyrosine 918 the chain carries Phosphotyrosine. Serine 935 carries the post-translational modification Phosphoserine. Tyrosine 945 is subject to Phosphotyrosine. Disordered stretches follow at residues 947–994 (QLPK…EARP) and 1021–1191 (YGSV…TAMQ). Pro residues predominate over residues 962-972 (PPTPPSQPPLS). Threonine 964 carries the post-translational modification Phosphothreonine. A phosphoserine mark is found at serine 967 and serine 972. The SH3-binding 2 motif lies at 970–975 (PLSPKK). Positions 1015–1029 (MFENPLYGSVSSFPK) are interaction with DAB2. The NPXY motif 2 motif lies at 1018-1021 (NPLY). Tyrosine 1021 is subject to Phosphotyrosine. A compositionally biased stretch (basic and acidic residues) spans 1032-1046 (PRKEQESPKMLRKEP). Positions 1039–1050 (PKMLRKEPPPCP) match the SH3-binding 3 motif. A compositionally biased stretch (pro residues) spans 1141–1150 (IPAPRPPLPV). Residues 1162–1184 (KGRDYRDNTELPHHGKHRQEEGL) are compositionally biased toward basic and acidic residues.

It belongs to the inositol 1,4,5-trisphosphate 5-phosphatase family. Interacts with tyrosine phosphorylated form of SHC1. Interacts with tyrosine phosphorylated form of DOK1. Interacts with tyrosine phosphorylated form of DOK3. Interacts with tyrosine phosphorylated form of SLAMF1/CD150. Interacts with PTPN11/SHP-2 in response to IL-3. Interacts with receptor EPOR. Interacts with receptors MS4A2/FCER1B and FCER1G. Interacts with receptors FCGR2B and FCGR3. Interacts with receptor FCGR2A, leading to regulate gene expression during the phagocytic process. Interacts with GRB2. Interacts with PLCG1. Interacts with tyrosine kinases SRC and TEC. Interacts with CRKL. Interacts with c-Met/MET. Interacts with MILR1 (tyrosine-phosphorylated). Isoform 5 interacts with IL6ST/gp130. Can weakly interact (via NPXY motif 2) with DAB2 (via PID domain); the interaction is impaired by tyrosine phosphorylation of the NPXY motif. Interacts (via SH2 domain) with tyrosine phosphorylated KLRC1 (via ITIM). Interacts with MPL/TPOR. In terms of processing, tyrosine phosphorylated by the members of the SRC family after exposure to a diverse array of extracellular stimuli such as cytokines, growth factors, antibodies, chemokines, integrin ligands and hypertonic and oxidative stress. Phosphorylated upon IgG receptor FCGR2B-binding. In terms of tissue distribution, specifically expressed in immune and hematopoietic cells. Levels vary considerably within this compartment. Lost during erythropoiesis when erythroid cells become Ter119+. Increases substantially with T-cell maturation and when resting B-cells are activated. Also present in mature granulocytes, monocyte/macrophages, mast cells and platelets. Isoform 5 is the only form expressed in embryonic stem (ES) cells and is coexpressed with other isoforms in hematopoietic stem cells, and disappears with differentiation.

The protein resides in the cytoplasm. The protein localises to the cell membrane. Its subcellular location is the membrane raft. It is found in the cytoskeleton. It catalyses the reaction a 1,2-diacyl-sn-glycero-3-phospho-(1D-myo-inositol-3,4,5-trisphosphate) + H2O = a 1,2-diacyl-sn-glycero-3-phospho-(1D-myo-inositol-3,4-bisphosphate) + phosphate. It carries out the reaction a 1,2-diacyl-sn-glycero-3-phospho-(1D-myo-inositol-4,5-bisphosphate) + H2O = a 1,2-diacyl-sn-glycero-3-phospho-(1D-myo-inositol 4-phosphate) + phosphate. The enzyme catalyses 1D-myo-inositol 1,3,4,5-tetrakisphosphate + H2O = 1D-myo-inositol 1,3,4-trisphosphate + phosphate. With respect to regulation, activated upon translocation to the sites of synthesis of PtdIns(3,4,5)P3 in the membrane. Phosphatidylinositol (PtdIns) phosphatase that specifically hydrolyzes the 5-phosphate of phosphatidylinositol-3,4,5-trisphosphate (PtdIns(3,4,5)P3) to produce PtdIns(3,4)P2, thereby negatively regulating the PI3K (phosphoinositide 3-kinase) pathways. Also able to hydrolyze the 5-phosphate of phosphatidylinositol-4,5-bisphosphate (PtdIns(4,5)P3) and inositol 1,3,4,5-tetrakisphosphate. Acts as a negative regulator of B-cell antigen receptor signaling. Mediates signaling from the FC-gamma-RIIB receptor (FCGR2B), playing a central role in terminating signal transduction from activating immune/hematopoietic cell receptor systems. Acts as a negative regulator of myeloid cell proliferation/survival and chemotaxis, mast cell degranulation, immune cells homeostasis, integrin alpha-IIb/beta-3 signaling in platelets and JNK signaling in B-cells. Regulates proliferation of osteoclast precursors, macrophage programming, phagocytosis and activation and is required for endotoxin tolerance. Involved in the control of cell-cell junctions, CD32a signaling in neutrophils and modulation of EGF-induced phospholipase C activity. Key regulator of neutrophil migration, by governing the formation of the leading edge and polarization required for chemotaxis. Modulates FCGR3/CD16-mediated cytotoxicity in NK cells. Mediates the activin/TGF-beta-induced apoptosis through its Smad-dependent expression. The protein is Phosphatidylinositol 3,4,5-trisphosphate 5-phosphatase 1 (Inpp5d) of Mus musculus (Mouse).